A 282-amino-acid chain; its full sequence is Flagellin (282 aa).

It belongs to the bacterial flagellin family.

The protein resides in the secreted. Its subcellular location is the bacterial flagellum. In terms of biological role, flagellin is the subunit protein which polymerizes to form the filaments of bacterial flagella. The flagellum is required to cause a persistent disease in a murine model of infection. The polypeptide is Flagellin (fliC) (Brucella melitensis biotype 1 (strain ATCC 23456 / CCUG 17765 / NCTC 10094 / 16M)).